Here is a 381-residue protein sequence, read N- to C-terminus: tRNA pseudouridine synthase D (381 aa).

Asp-81 serves as the catalytic Nucleophile. The 176-residue stretch at Gly-160–Val-335 folds into the TRUD domain.

It belongs to the pseudouridine synthase TruD family.

The enzyme catalyses uridine(13) in tRNA = pseudouridine(13) in tRNA. Its function is as follows. Responsible for synthesis of pseudouridine from uracil-13 in transfer RNAs. In Helicobacter pylori (strain ATCC 700392 / 26695) (Campylobacter pylori), this protein is tRNA pseudouridine synthase D.